Reading from the N-terminus, the 47-residue chain is Accessory gland peptide Acp33A (47 aa).

A signal peptide spans 1 to 21; sequence MLPSKRVPFLFTIILFLAGLG.

In terms of tissue distribution, main cells of accessory gland and seminal fluid.

It is found in the secreted. Functionally, responsible for physiological and behavioral changes in mated female flies. This is Accessory gland peptide Acp33A (Acp33A) from Drosophila melanogaster (Fruit fly).